The sequence spans 103 residues: Large ribosomal subunit protein uL24 (103 aa).

It belongs to the universal ribosomal protein uL24 family. In terms of assembly, part of the 50S ribosomal subunit.

In terms of biological role, one of two assembly initiator proteins, it binds directly to the 5'-end of the 23S rRNA, where it nucleates assembly of the 50S subunit. Functionally, one of the proteins that surrounds the polypeptide exit tunnel on the outside of the subunit. The protein is Large ribosomal subunit protein uL24 of Actinobacillus pleuropneumoniae serotype 5b (strain L20).